The following is a 344-amino-acid chain: Short chain dehydrogenase/reductase mfmJ (344 aa).

The NADP(+) site is built by L51, K76, D99, N126, Y213, and K217. The Proton donor role is filled by Y213. Catalysis depends on K217, which acts as the Lowers pKa of active site Tyr.

The protein belongs to the short-chain dehydrogenases/reductases (SDR) family.

Its function is as follows. Short chain dehydrogenase/reductase; part of the gene cluster that mediates the biosynthesis of the phthalide-terpenoid hybrid 11'-O-desmethylfendlerol. MfmJ seems not to be involved directly in the biosynthesis of 11'-O-desmethylfendlerol and its role has still to be determined. The biosynthesis of 11'-O-desmethylfendlerol begins with the NR-PKS mfmB that forms 3,5-dimethylorsellinic acid (DMOA), which is then transformed into the phthalide 5,7-dihydroxy-4-(hydroxymethyl)-6-methylphthalide by the cytochrome P450 monooxygenase mfmA and the hydrolase mfmC. Subsequently, the methyltransferase mfmE catalyzes 7-O-methylation to yield 5-hydroxy-4-(hydroxymethyl)-7-methoxy-6-methylphthalide, which undergoes C-3 hydroxylation by the cytochrome P450 monooxygenase mfmF. The resultant cyclopolic acid (2,5-dihydroxy-4-(hydroxymethyl)-7-methoxy-6-methylphthalide) is then farnesylated by the DMATS-type prenyltransferase mfmD to afford 5-O-farnesylcyclopolic acid. Finally, the Pyr4-family terpene cyclase mfmH cyclizes the farnesyl moiety of 5-O-farnesylcyclopolic acid into a drimane-like structure, thus completing the biosynthesis of 11'-O-desmethylfendlerol. The polypeptide is Short chain dehydrogenase/reductase mfmJ (Annulohypoxylon moriforme (Filamentous fungus)).